A 388-amino-acid polypeptide reads, in one-letter code: Galactokinase (388 aa).

32–35 provides a ligand contact to substrate; the sequence is EHTD. Residues Ser-66 and 123-129 contribute to the ATP site; that span reads GASLSSS. Mg(2+)-binding residues include Ser-129 and Glu-161. The active-site Proton acceptor is the Asp-173. Tyr-223 contacts substrate.

It belongs to the GHMP kinase family. GalK subfamily.

It localises to the cytoplasm. The enzyme catalyses alpha-D-galactose + ATP = alpha-D-galactose 1-phosphate + ADP + H(+). It functions in the pathway carbohydrate metabolism; galactose metabolism. In terms of biological role, catalyzes the transfer of the gamma-phosphate of ATP to D-galactose to form alpha-D-galactose-1-phosphate (Gal-1-P). The chain is Galactokinase from Staphylococcus carnosus (strain TM300).